The sequence spans 184 residues: Bifunctional protein PyrR (184 aa).

A PRPP-binding motif is present at residues 105 to 117 (VVMVDDVLFTGRT).

It belongs to the purine/pyrimidine phosphoribosyltransferase family. PyrR subfamily.

It catalyses the reaction UMP + diphosphate = 5-phospho-alpha-D-ribose 1-diphosphate + uracil. In terms of biological role, regulates the transcription of the pyrimidine nucleotide (pyr) operon in response to exogenous pyrimidines. Also displays a weak uracil phosphoribosyltransferase activity which is not physiologically significant. This Rubrobacter xylanophilus (strain DSM 9941 / JCM 11954 / NBRC 16129 / PRD-1) protein is Bifunctional protein PyrR.